The following is a 143-amino-acid chain: uncharacterized protein (143 aa).

The HTH cro/C1-type domain maps to Ile24 to Phe78. A DNA-binding region (H-T-H motif) is located at residues Gln35 to Lys54.

This is an uncharacterized protein from Sinorhizobium fredii (strain NBRC 101917 / NGR234).